The following is a 597-amino-acid chain: Large ribosomal subunit assembly factor BipA (597 aa).

The 196-residue stretch at 3–198 (LPIRNVAIIA…AILHHVPPPA (196 aa)) folds into the tr-type G domain. Residues 15–20 (DHGKTT) and 128–131 (NKID) contribute to the GTP site.

Belongs to the TRAFAC class translation factor GTPase superfamily. Classic translation factor GTPase family. BipA subfamily. In terms of assembly, monomer.

The protein resides in the cytoplasm. The catalysed reaction is GTP + H2O = GDP + phosphate + H(+). Its function is as follows. A 50S ribosomal subunit assembly protein with GTPase activity, required for 50S subunit assembly at low temperatures, may also play a role in translation. Binds GTP and analogs. Binds the 70S ribosome between the 30S and 50S subunits, in a similar position as ribosome-bound EF-G; it contacts a number of ribosomal proteins, both rRNAs and the A-site tRNA. This is Large ribosomal subunit assembly factor BipA from Synechocystis sp. (strain ATCC 27184 / PCC 6803 / Kazusa).